Here is a 408-residue protein sequence, read N- to C-terminus: 2-acyl-4-prenylphloroglucinol 6-prenyltransferase, chloroplastic (408 aa).

The transit peptide at 1-46 (MELSSACNLSLKPNYYYYPTSLFPSNNSYNNLKASSYYQTQRPIKC) directs the protein to the chloroplast. 9 consecutive transmembrane segments (helical) span residues 119-139 (PIPFVAVSIICTSLFGAELLK), 146-166 (WQLMFDAFQGLVVILLYHIYI), 193-213 (SVKSAWFLTIFSAVASLLLMI), 217-237 (CGLFLTCMYCCYLVIGAMYSV), 257-277 (IGIGINFLINYASRATLGLPF), 281-301 (PPFTFIIGFVSTLSIILSILK), 326-346 (IVLVGSGFFLLNYVAAIGVAI), 355-375 (YIMIPAHAIFASALIFKTWLL), and 388-408 (YYHFLWFLMIAEYILYPFIST).

It belongs to the UbiA prenyltransferase family. Homo- and heteromer. Interacts with PT1L, forming a functional metabolon. The cofactor is Mg(2+). As to expression, expressed in trichomes.

The protein localises to the plastid. The protein resides in the chloroplast membrane. The catalysed reaction is a 2-acyl-4-prenylphloroglucinol + dimethylallyl diphosphate = a 2-acyl-4,6-diprenylphloroglucinol + diphosphate. It carries out the reaction a 2-acyl-4,6-diprenylphloroglucinol + dimethylallyl diphosphate = a 2-acyl-4,6,6-triprenylphloroglucinol + diphosphate. It functions in the pathway secondary metabolite biosynthesis. Involved in the biosynthesis of prenylated phenolics natural products which contribute to the bitter taste of beer and display broad biological activities. Catalyzes the two last prenylation steps in the beta-bitter acid pathway. Uses dimethylallyl diphosphate (DMAPP) as the prenyl donor. This Humulus lupulus (European hop) protein is 2-acyl-4-prenylphloroglucinol 6-prenyltransferase, chloroplastic.